The primary structure comprises 246 residues: TVP38/TMEM64 family membrane protein MT0653 (246 aa).

The next 5 helical transmembrane spans lie at 19 to 39 (LVVF…TDVI), 57 to 77 (LTYV…PILA), 83 to 103 (LFGP…TAVV), 157 to 177 (AFGT…IGSA), and 196 to 216 (LLAS…AFAA).

The protein belongs to the TVP38/TMEM64 family.

Its subcellular location is the cell membrane. The chain is TVP38/TMEM64 family membrane protein MT0653 from Mycobacterium tuberculosis (strain CDC 1551 / Oshkosh).